The sequence spans 901 residues: Alpha-actinin-3 (901 aa).

At Met-1 the chain carries N-acetylmethionine. Residues 1 to 261 (MMMVLQPEGL…IMTYVSCFYH (261 aa)) are actin-binding. 2 Calponin-homology (CH) domains span residues 45 to 149 (KQQR…LRFA) and 158 to 264 (TSAK…HAFA). Spectrin repeat units lie at residues 288–398 (KLME…WLLS), 408–513 (HLAE…ALER), 523–634 (QLQL…MLQE), and 644–747 (RLRR…EVEN). EF-hand domains are found at residues 760–795 (EQLN…MGYD) and 796–831 (LGEV…ETAE). The Ca(2+) site is built by Asp-773, Asn-777, Met-779, Asp-784, Asp-809, and Asn-811.

The protein belongs to the alpha-actinin family. In terms of assembly, homodimer; antiparallel. Also forms heterodimers with ACTN2. Interacts with MYOZ1.

Functionally, F-actin cross-linking protein which is thought to anchor actin to a variety of intracellular structures. This is a bundling protein. In Bos taurus (Bovine), this protein is Alpha-actinin-3 (ACTN3).